We begin with the raw amino-acid sequence, 412 residues long: Short-chain specific acyl-CoA dehydrogenase, mitochondrial (412 aa).

A mitochondrion-targeting transit peptide spans 1–24; sequence MAAALLARAGGSLGRALRARDWRR. Thr-27 is subject to Phosphothreonine. The residue at position 51 (Lys-51) is an N6-acetyllysine; alternate. Lys-51 carries the N6-succinyllysine; alternate modification. Lys-72 is modified (N6-acetyllysine). Position 129 is an N6-acetyllysine; alternate (Lys-129). N6-succinyllysine; alternate is present on Lys-129. FAD-binding positions include 152 to 161 and 185 to 187; these read FALSEPGNGS and WIT. Ser-161 contributes to the substrate binding site. At Lys-208 the chain carries N6-acetyllysine. Residue Lys-262 is modified to N6-acetyllysine; alternate. Lys-262 is modified (N6-succinyllysine; alternate). Position 269-272 (269-272) interacts with substrate; sequence DMGR. An N6-acetyllysine modification is found at Lys-292. Arg-297 lines the FAD pocket. Lys-306 carries the post-translational modification N6-acetyllysine; alternate. At Lys-306 the chain carries N6-succinyllysine; alternate. Residue 365–369 coordinates FAD; the sequence is QILGG. Residue Glu-392 is the Proton acceptor of the active site. Position 394-396 (394-396) interacts with FAD; it reads TSE.

Belongs to the acyl-CoA dehydrogenase family. As to quaternary structure, homotetramer. FAD serves as cofactor.

It is found in the mitochondrion matrix. It carries out the reaction a short-chain 2,3-saturated fatty acyl-CoA + oxidized [electron-transfer flavoprotein] + H(+) = a short-chain (2E)-enoyl-CoA + reduced [electron-transfer flavoprotein]. The enzyme catalyses butanoyl-CoA + oxidized [electron-transfer flavoprotein] + H(+) = (2E)-butenoyl-CoA + reduced [electron-transfer flavoprotein]. The catalysed reaction is pentanoyl-CoA + oxidized [electron-transfer flavoprotein] + H(+) = (2E)-pentenoyl-CoA + reduced [electron-transfer flavoprotein]. It catalyses the reaction hexanoyl-CoA + oxidized [electron-transfer flavoprotein] + H(+) = (2E)-hexenoyl-CoA + reduced [electron-transfer flavoprotein]. It functions in the pathway lipid metabolism; mitochondrial fatty acid beta-oxidation. Short-chain specific acyl-CoA dehydrogenase is one of the acyl-CoA dehydrogenases that catalyze the first step of mitochondrial fatty acid beta-oxidation, an aerobic process breaking down fatty acids into acetyl-CoA and allowing the production of energy from fats. The first step of fatty acid beta-oxidation consists in the removal of one hydrogen from C-2 and C-3 of the straight-chain fatty acyl-CoA thioester, resulting in the formation of trans-2-enoyl-CoA. Among the different mitochondrial acyl-CoA dehydrogenases, short-chain specific acyl-CoA dehydrogenase acts specifically on acyl-CoAs with saturated 4 to 6 carbons long primary chains. In Rattus norvegicus (Rat), this protein is Short-chain specific acyl-CoA dehydrogenase, mitochondrial (Acads).